Reading from the N-terminus, the 380-residue chain is Ceramide synthase 2 (380 aa).

Residues 1-40 (MLQTLYDYFWWERLWLPVNLTWADLEDRDGRVYAKASDLY) are Lumenal-facing. Asn-19 carries N-linked (GlcNAc...) asparagine glycosylation. A helical transmembrane segment spans residues 41-61 (ITLPLALLFLIVRYFFELYVA). Residues 67–128 (LLNIKEKTRL…RRRRNQDRPS (62 aa)) form a homeobox-like region. Residues 131-332 (KKFREASWRF…ILRMAHKFIT (202 aa)) form the TLC domain. 4 helical membrane-spanning segments follow: residues 140–160 (FTFY…KPWF), 181–201 (WYYM…ASDV), 209–229 (QIIH…ANYI), and 264–284 (IFIV…PFWI). A Last loop motif motif is present at residues 291 to 300 (YPLELYPAFF). Residues 304-324 (FFNSMMGVLQLLHIFWAYLIL) traverse the membrane as a helical segment. The Cytoplasmic portion of the chain corresponds to 325-380 (RMAHKFITGKLVEDERSDREETESSEGEEAAAGGGAKSRPLANGHPILNNNHRKND). Positions 338–380 (DERSDREETESSEGEEAAAGGGAKSRPLANGHPILNNNHRKND) are disordered. At Ser-341 the chain carries Phosphoserine. Residues 344 to 353 (EETESSEGEE) are compositionally biased toward acidic residues. Thr-346 carries the post-translational modification Phosphothreonine. Residues Ser-348 and Ser-349 each carry the phosphoserine modification.

In terms of assembly, interacts with ATP6V0C, ASGR1, ASGR2 and SLC22A1/OCT1. Interacts with ELOV1, HSD17B12 and TECR. Interacts with NDUFS2. Interacts with PAQR4; the interaction regulates the stability and activity of CERS2 and is inhibited in presence of ceramides. In terms of processing, acetylated. Deacetylation by SIRT3 increases enzyme activity and promotes mitochondrial ceramide accumulation. Phosphorylated at the C-terminus by CK2, leading to increase the ceramide synthase activity. Expressed in kidney, liver, brain, heart, placenta and lung.

It localises to the endoplasmic reticulum membrane. The enzyme catalyses a very long-chain fatty acyl-CoA + a sphingoid base = an N-(very-long-chain fatty acyl)-sphingoid base + CoA + H(+). The catalysed reaction is docosanoyl-CoA + sphinganine = N-docosanoylsphinganine + CoA + H(+). It catalyses the reaction tetracosanoyl-CoA + sphinganine = N-tetracosanoylsphinganine + CoA + H(+). It carries out the reaction hexacosanoyl-CoA + sphinganine = N-hexacosanoylsphinganine + CoA + H(+). The enzyme catalyses (15Z)-tetracosenoyl-CoA + sphinganine = N-(15Z-tetracosenoyl)-sphinganine + CoA + H(+). The catalysed reaction is 2-hydroxytetracosanoyl-CoA + sphinganine = N-(2-hydroxytetracosanoyl)-sphinganine + CoA + H(+). It catalyses the reaction 2-hydroxydocosanoyl-CoA + sphinganine = N-(2-hydroxydocosanoyl)-sphinganine + CoA + H(+). It carries out the reaction 2-hydroxytetracosenoyl-CoA + sphinganine = N-(2-hydroxytetracosenoyl)-sphinganine + CoA + H(+). The enzyme catalyses tetracosenoyl-CoA + sphinganine = an N-tetracosenoylsphinganine + CoA + H(+). The catalysed reaction is hexacosenoyl-CoA + sphinganine = N-hexacosenoylsphinganine + CoA + H(+). It catalyses the reaction tetracosanoyl-CoA + sphing-4-enine = N-tetracosanoyl-sphing-4-enine + CoA + H(+). It carries out the reaction tetracosenoyl-CoA + sphing-4-enine = N-(tetracosenoyl)-sphing-4-enine + CoA + H(+). The enzyme catalyses heptadecasphing-4-enine + tetracosanoyl-CoA = N-tetracosanoyl-heptadecasphing-4-enine + CoA + H(+). The catalysed reaction is a fatty acyl-CoA + sphing-4-enine = an N-acylsphing-4-enine + CoA + H(+). It catalyses the reaction sphing-4-enine + hexadecanoyl-CoA = N-hexadecanoylsphing-4-enine + CoA + H(+). It carries out the reaction sphing-4-enine + octadecanoyl-CoA = N-octadecanoylsphing-4-enine + CoA + H(+). The enzyme catalyses eicosanoyl-CoA + sphing-4-enine = N-eicosanoyl-sphing-4-enine + CoA + H(+). The catalysed reaction is sphinganine + hexadecanoyl-CoA = N-hexadecanoylsphinganine + CoA + H(+). It catalyses the reaction sphinganine + octadecanoyl-CoA = N-(octadecanoyl)-sphinganine + CoA + H(+). It carries out the reaction sphinganine + (9Z)-octadecenoyl-CoA = N-(9Z-octadecenoyl)-sphinganine + CoA + H(+). The enzyme catalyses eicosanoyl-CoA + sphinganine = N-eicosanoylsphinganine + CoA + H(+). The protein operates within lipid metabolism; sphingolipid metabolism. Its activity is regulated as follows. Ceramide synthase activity is inhibited by sphingosine-1-phosphate. Functionally, ceramide synthase that catalyzes the transfer of the acyl chain from acyl-CoA to a sphingoid base, with high selectivity toward very-long-chain fatty acyl-CoA (chain length C22-C27). N-acylates sphinganine and sphingosine bases to form dihydroceramides and ceramides in de novo synthesis and salvage pathways, respectively. Plays a non-redundant role in the synthesis of ceramides with very-long-chain fatty acids in kidney, liver and brain. Regulates the abundance of myelin-specific sphingolipids galactosylceramide and sulfatide that affects myelin sheath architecture and motor neuron functions. This chain is Ceramide synthase 2, found in Homo sapiens (Human).